Reading from the N-terminus, the 262-residue chain is 14-3-3-like protein A (262 aa).

Residues 240-262 form a disordered region; sequence DNAEEGGDEIKEAASKPEGEGHS. Residues 247–262 are compositionally biased toward basic and acidic residues; the sequence is DEIKEAASKPEGEGHS.

This sequence belongs to the 14-3-3 family.

This chain is 14-3-3-like protein A, found in Hordeum vulgare (Barley).